We begin with the raw amino-acid sequence, 253 residues long: 5-oxoprolinase subunit A (253 aa).

This sequence belongs to the LamB/PxpA family. As to quaternary structure, forms a complex composed of PxpA, PxpB and PxpC.

It carries out the reaction 5-oxo-L-proline + ATP + 2 H2O = L-glutamate + ADP + phosphate + H(+). Its function is as follows. Catalyzes the cleavage of 5-oxoproline to form L-glutamate coupled to the hydrolysis of ATP to ADP and inorganic phosphate. The polypeptide is 5-oxoprolinase subunit A (Ruegeria pomeroyi (strain ATCC 700808 / DSM 15171 / DSS-3) (Silicibacter pomeroyi)).